The primary structure comprises 274 residues: Single-stranded DNA-binding protein WHY1, chloroplastic (274 aa).

The transit peptide at 1–54 directs the protein to the chloroplast; that stretch reads MSNFSLSPSPTSGFSLNLQNPTKTSYLSFSSSINTIFAPLSSNTTKSFSGLTHK. The required for ssDNA binding stretch occupies residues 100-105; it reads KGKAAL. Positions 178 to 191 match the Nuclear localization signal motif; sequence KGRSDEGRVRKVLK. Residues 253-274 form a disordered region; that stretch reads PEDASRSNNANPRSGAELEWNR.

It belongs to the Whirly family. Homotetramer.

The protein localises to the nucleus. It is found in the plastid. It localises to the chloroplast. In terms of biological role, single-stranded DNA-binding protein that acts as a transcriptional activator of the pathogenesis-related gene PR-10a. Upon elicitation, binds a 30bp promoter sequence known as elicitor element response (ERE) and is required for PR-10a expression. In Solanum tuberosum (Potato), this protein is Single-stranded DNA-binding protein WHY1, chloroplastic (WHY1).